We begin with the raw amino-acid sequence, 288 residues long: HTH-type transcriptional regulator CzcR (288 aa).

An HTH lysR-type domain is found at 1–58 (MELRDLQIFQSVADQGSVSSAAKELNYVQSNVTTRIKQLENELKTPLFYRHKRGMTLT). The segment at residues 18 to 37 (VSSAAKELNYVQSNVTTRIK) is a DNA-binding region (H-T-H motif).

This sequence belongs to the LysR transcriptional regulatory family.

In Bacillus thuringiensis subsp. konkukian (strain 97-27), this protein is HTH-type transcriptional regulator CzcR (czcR).